The sequence spans 76 residues: Putative defensin-like protein 121 (76 aa).

Positions 1-26 (MTYKATILAIFMIILVLGIGTKETRG) are cleaved as a signal peptide. 4 disulfide bridges follow: Cys-30/Cys-74, Cys-39/Cys-59, Cys-44/Cys-68, and Cys-48/Cys-70.

Belongs to the DEFL family.

It localises to the secreted. In Arabidopsis thaliana (Mouse-ear cress), this protein is Putative defensin-like protein 121 (LCR55).